A 464-amino-acid polypeptide reads, in one-letter code: 3-isopropylmalate dehydratase large subunit (464 aa).

Residues cysteine 337, cysteine 397, and cysteine 400 each contribute to the [4Fe-4S] cluster site.

Belongs to the aconitase/IPM isomerase family. LeuC type 1 subfamily. As to quaternary structure, heterodimer of LeuC and LeuD. It depends on [4Fe-4S] cluster as a cofactor.

The enzyme catalyses (2R,3S)-3-isopropylmalate = (2S)-2-isopropylmalate. The protein operates within amino-acid biosynthesis; L-leucine biosynthesis; L-leucine from 3-methyl-2-oxobutanoate: step 2/4. Its function is as follows. Catalyzes the isomerization between 2-isopropylmalate and 3-isopropylmalate, via the formation of 2-isopropylmaleate. This is 3-isopropylmalate dehydratase large subunit from Bacillus cereus (strain G9842).